A 65-amino-acid polypeptide reads, in one-letter code: MKISELRDKSLEELTQLLDEKQLDAFRIRMAKATGQLGNTHEVRVNRRAIAQLQTLINEKQRGDS.

This sequence belongs to the universal ribosomal protein uL29 family.

The protein is Large ribosomal subunit protein uL29 of Psychrobacter arcticus (strain DSM 17307 / VKM B-2377 / 273-4).